A 567-amino-acid polypeptide reads, in one-letter code: TPR repeat-containing protein MJ1428 (567 aa).

13 TPR repeats span residues 14 to 47 (YEDW…KNTN), 48 to 81 (PIDW…SPSN), 83 to 115 (YFAY…IKNE), 116 to 148 (ELFE…ANSK), 150 to 183 (LNAL…NPSH), 199 to 234 (INSY…DENS), 236 to 268 (ISYY…FNRS), 269 to 301 (LYYA…NSQN), 303 to 335 (YAYF…YLEE), 344 to 379 (LNLY…ENSS), 380 to 412 (RWWY…NPKD), 414 to 446 (STLK…VNSL), and 505 to 538 (AYIY…EMYR).

The protein is TPR repeat-containing protein MJ1428 of Methanocaldococcus jannaschii (strain ATCC 43067 / DSM 2661 / JAL-1 / JCM 10045 / NBRC 100440) (Methanococcus jannaschii).